A 140-amino-acid polypeptide reads, in one-letter code: Putative nickel-responsive regulator 2 (140 aa).

Residues histidine 81, histidine 92, histidine 94, and cysteine 100 each contribute to the Ni(2+) site.

Belongs to the transcriptional regulatory CopG/NikR family. It depends on Ni(2+) as a cofactor.

Transcriptional regulator. The sequence is that of Putative nickel-responsive regulator 2 from Methanosarcina mazei (strain ATCC BAA-159 / DSM 3647 / Goe1 / Go1 / JCM 11833 / OCM 88) (Methanosarcina frisia).